Reading from the N-terminus, the 712-residue chain is Anaerobic ribonucleoside-triphosphate reductase (712 aa).

Residues 3-92 (PHVMKRDGCK…EYRHDRDIER (90 aa)) form the ATP-cone domain. Positions 583–708 (KKVNPYDKID…VKRRVKHLGN (126 aa)) constitute a Glycine radical domain. 4 residues coordinate Zn(2+): Cys-644, Cys-647, Cys-662, and Cys-665. A Glycine radical modification is found at Gly-681.

Belongs to the anaerobic ribonucleoside-triphosphate reductase family. Homodimer. Forms a tetramer composed of two NrdD and two NrdG subunits.

The catalysed reaction is a ribonucleoside 5'-triphosphate + formate + H(+) = a 2'-deoxyribonucleoside 5'-triphosphate + CO2 + H2O. The enzyme catalyses formate + ATP + H(+) = dATP + CO2 + H2O. It carries out the reaction CTP + formate + H(+) = dCTP + CO2 + H2O. It catalyses the reaction GTP + formate + H(+) = dGTP + CO2 + H2O. The catalysed reaction is UTP + formate + H(+) = dUTP + CO2 + H2O. Its activity is regulated as follows. Activated under anaerobic conditions by NrdG, a tightly associated activase. Activation involves the formation of a glycyl radical at Gly-681. Exposure of the activated reductase to oxygen leads to C-terminal truncation and inactivation of the protein, by cleavage at the N-terminal side of Gly-681. The presence of zinc protects the protein from proteolysis and prevents the formation of disulfide bridges within it. The enzyme shows a basal activity in the absence of any effector, but reduction is stimulated up to 10-fold by an appropriate modulator (dGTP for ATP reduction, ATP for CTP and UTP reduction, and dTTP for GTP reduction). dGTP and dTTP inhibit the reduction of the incorrect substrate, and dATP inhibits reduction of all four. These modulators act as allosteric effectors. Catalyzes the conversion of ribonucleotides into deoxyribonucleotides, which are required for DNA synthesis and repair. Can reduce each of the four common ribonucleoside triphosphates. The protein is Anaerobic ribonucleoside-triphosphate reductase of Escherichia coli (strain K12).